Consider the following 122-residue polypeptide: Large ribosomal subunit protein uL14 (122 aa).

This sequence belongs to the universal ribosomal protein uL14 family. As to quaternary structure, part of the 50S ribosomal subunit. Forms a cluster with proteins L3 and L19. In the 70S ribosome, L14 and L19 interact and together make contacts with the 16S rRNA in bridges B5 and B8.

Its function is as follows. Binds to 23S rRNA. Forms part of two intersubunit bridges in the 70S ribosome. The chain is Large ribosomal subunit protein uL14 from Microcystis aeruginosa (strain NIES-843 / IAM M-2473).